The sequence spans 324 residues: Gamma-soluble NSF attachment protein (324 aa).

Residues 285–298 (NPTINSTAPQQQYS) show a composition bias toward polar residues. Residues 285–324 (NPTINSTAPQQQYSNTTTTTTNNTNNNNPTSQQDDDEDVL) are disordered. Residues 299–312 (NTTTTTTNNTNNNN) are compositionally biased toward low complexity.

It belongs to the SNAP family. As to quaternary structure, interacts with nsfA and probably SNARE proteins.

Its subcellular location is the cytoplasmic vesicle membrane. May be required for vesicular transport between the endoplasmic reticulum and the Golgi apparatus. Involved in vesicle fusion with nsfA and probably SNARE proteins. The polypeptide is Gamma-soluble NSF attachment protein (snpC) (Dictyostelium discoideum (Social amoeba)).